We begin with the raw amino-acid sequence, 172 residues long: Dual-action ribosomal maturation protein DarP (172 aa).

This sequence belongs to the DarP family.

Its subcellular location is the cytoplasm. Member of a network of 50S ribosomal subunit biogenesis factors which assembles along the 30S-50S interface, preventing incorrect 23S rRNA structures from forming. Promotes peptidyl transferase center (PTC) maturation. The sequence is that of Dual-action ribosomal maturation protein DarP from Azotobacter vinelandii (strain DJ / ATCC BAA-1303).